The primary structure comprises 1105 residues: KAT8 regulatory NSL complex subunit 1 (1105 aa).

Lysine 104 is subject to N6-acetyllysine. Disordered stretches follow at residues 145 to 211 and 225 to 263; these read GQTA…CTLP and NNSTANKSSVNSMEQPALQGSSRLSPGTDSSSNLGGVKL. Polar residues predominate over residues 225–258; that stretch reads NNSTANKSSVNSMEQPALQGSSRLSPGTDSSSNL. At serine 249 the chain carries Phosphoserine. Lysine 262 is covalently cross-linked (Glycyl lysine isopeptide (Lys-Gly) (interchain with G-Cter in SUMO2)). A Phosphoserine modification is found at serine 268. A coiled-coil region spans residues 283–314; the sequence is RITALLRRQADIESRARRLQKRLQVVQAKQVE. Lysine 331 is covalently cross-linked (Glycyl lysine isopeptide (Lys-Gly) (interchain with G-Cter in SUMO2)). Disordered stretches follow at residues 399–426 and 733–857; these read DSDVTDSSSGGESDIEEEELTRADPEQR and TAKL…RRGE. Composition is skewed to basic and acidic residues over residues 741 to 753 and 780 to 804; these read TRPDRTHRQHLDD and DPNHSKMRLRDHSSERSEVLKHHTD. Positions 827–850 are enriched in low complexity; sequence STSSDSPAPASSSSQVTASTSQQP. The interval 850-882 is required for activation of KAT8 histone acetyltransferase activity; it reads PVRRRRGESSFDINNIVIPMSVAATTRVEKLQY. The 152-residue stretch at 884–1035 folds into the PEHE domain; the sequence is EILTPSWREV…GLDEQSVQPW (152 aa). Positions 910–928 are interaction with KAT8 HAT domain; the sequence is EDLSDAAFAALHAKCEEME. The disordered stretch occupies residues 938–1034; it reads VPPQRRGSRS…LGLDEQSVQP (97 aa). The span at 955 to 965 shows a compositional bias: polar residues; it reads TTPQLGSANPS. The span at 975 to 988 shows a compositional bias: low complexity; that stretch reads SSSHSLSEYSHGQS. Residues serine 991 and serine 994 each carry the phosphoserine modification. Threonine 1003 carries the phosphothreonine modification. Over residues 1008-1019 the composition is skewed to basic and acidic residues; that stretch reads DTPRHLASEDTR. Phosphoserine is present on serine 1045. Residues 1058 to 1105 form a disordered region; the sequence is ERAARCTRRTSGSKTGRETEAAPTSPPIVPLKSRHLVAAATAQRPTHR.

In terms of assembly, component of the NSL complex at least composed of MOF/KAT8, KANSL1, KANSL2, KANSL3, MCRS1, PHF20, OGT1/OGT, WDR5 and HCFC1. Interacts (via PEHE domain) with KAT8 (via HAT domain); the interaction is direct. Component of some MLL1/MLL complex, at least composed of the core components KMT2A/MLL1, ASH2L, HCFC1, WDR5 and RBBP5, as well as the facultative components BACC1, CHD8, E2F6, HSP70, INO80C, KANSL1, LAS1L, MAX, MCRS1, MGA, KAT8/MOF, PELP1, PHF20, PRP31, RING2, RUVB1/TIP49A, RUVB2/TIP49B, SENP3, TAF1, TAF4, TAF6, TAF7, TAF9 and TEX10. As to expression, expressed in the brain.

The protein resides in the nucleus. Its subcellular location is the chromosome. It localises to the centromere. The protein localises to the kinetochore. It is found in the mitochondrion. The protein resides in the cytoplasm. Its subcellular location is the cytoskeleton. It localises to the spindle pole. Non-catalytic component of the NSL histone acetyltransferase complex, a multiprotein complex that mediates histone H4 acetylation at 'Lys-5'- and 'Lys-8' (H4K5ac and H4K8ac) at transcription start sites and promotes transcription initiation. The NSL complex also acts as a regulator of gene expression in mitochondria. In addition to its role in transcription, KANSL1 also plays an essential role in spindle assembly during mitosis. Associates with microtubule ends and contributes to microtubule stability. This Homo sapiens (Human) protein is KAT8 regulatory NSL complex subunit 1 (KANSL1).